A 306-amino-acid chain; its full sequence is Curved DNA-binding protein (306 aa).

One can recognise a J domain in the interval 5-69 (DYYAIMGVKP…QRRAEYDQMW (65 aa)).

It localises to the cytoplasm. The protein resides in the nucleoid. Its function is as follows. DNA-binding protein that preferentially recognizes a curved DNA sequence. It is probably a functional analog of DnaJ; displays overlapping activities with DnaJ, but functions under different conditions, probably acting as a molecular chaperone in an adaptive response to environmental stresses other than heat shock. Lacks autonomous chaperone activity; binds native substrates and targets them for recognition by DnaK. Its activity is inhibited by the binding of CbpM. The protein is Curved DNA-binding protein of Escherichia coli O7:K1 (strain IAI39 / ExPEC).